A 585-amino-acid chain; its full sequence is Lipoprotein LpqB (585 aa).

Positions M1 to G18 are cleaved as a signal peptide. C19 is lipidated: N-palmitoyl cysteine. C19 carries S-diacylglycerol cysteine lipidation. The tract at residues S24 to T46 is disordered. Over residues P37–T46 the composition is skewed to pro residues.

Belongs to the LpqB lipoprotein family. Interacts with MtrB, probably extracytoplasmically via its sensor domain.

The protein resides in the cell membrane. It localises to the secreted. Its subcellular location is the cell wall. Its function is as follows. May modulate activity of the MtrAB system in controlling homeostasis of the cell wall and cell division. The polypeptide is Lipoprotein LpqB (Mycolicibacterium smegmatis (strain ATCC 700084 / mc(2)155) (Mycobacterium smegmatis)).